A 225-amino-acid polypeptide reads, in one-letter code: MSIKQWPEGERPREKLLERGAAALSDAELLAILLRVGTRGMSAVDLARYLLQEFGSLGRLMSAEVGKLSAYKGMGTASFTQFAVVREIGRRILAEELQESIVLSDPDTVADYLRFHLGQEKVEVSVALLLNRQNQLIAVRELSRGTVAENTIYIREIVKLALDEYADSLIIAHNHPGGSPEPSQEDIMFTRRLAQAMSLVDVSLLDHFIVTAQTVRSFRQLGLMP.

Residues 102–224 (VLSDPDTVAD…VRSFRQLGLM (123 aa)) form the MPN domain. Zn(2+) contacts are provided by His173, His175, and Asp186. The short motif at 173–186 (HNHPGGSPEPSQED) is the JAMM motif element.

This sequence belongs to the UPF0758 family.

This Neisseria meningitidis serogroup C (strain 053442) protein is UPF0758 protein NMCC_1157.